The sequence spans 388 residues: Chalcone synthase D (388 aa).

Cys-164 is an active-site residue.

Belongs to the thiolase-like superfamily. Chalcone/stilbene synthases family.

It carries out the reaction (E)-4-coumaroyl-CoA + 3 malonyl-CoA + 3 H(+) = 2',4,4',6'-tetrahydroxychalcone + 3 CO2 + 4 CoA. The protein operates within secondary metabolite biosynthesis; flavonoid biosynthesis. The primary product of this enzyme is 4,2',4',6'-tetrahydroxychalcone (also termed naringenin-chalcone or chalcone) which can under specific conditions spontaneously isomerize into naringenin. This Ipomoea nil (Japanese morning glory) protein is Chalcone synthase D (CHSD).